The following is a 375-amino-acid chain: E3 ubiquitin-protein ligase RNF34 (375 aa).

An FYVE-type zinc finger spans residues 56–107; sequence EGPNIVCKACGLSFSVFRKKHVCCDCKKDFCSVCSVLQENLRRCSTCHLLQE. One can recognise an SAP 1 domain in the interval 115–134; the sequence is LMRLKVKDLRQYLILRNIPI. Position 169 is a phosphoserine (serine 169). The interval 202-250 is disordered; it reads RTLGSGALAQEPSEIASANTEDDEDDDDDDDDDDDDDEENLEDRTPGLT. Over residues 221–242 the composition is skewed to acidic residues; the sequence is TEDDEDDDDDDDDDDDDDEENL. 2 positions are modified to phosphoserine: serine 257 and serine 259. Residues 267 to 281 enclose the SAP 2 domain; that stretch reads VEGMSVRQLKEILAR. The RING-type zinc finger occupies 328–363; sequence CRICMDAVIDCVLLECGHMVTCTKCGKRMSECPICR.

Interacts with CASP8 and CASP10. Interacts with p53/TP53; involved in p53/TP53 ubiquitination. Interacts (via RING-type zinc finger) with MDM2; the interaction stabilizes MDM2. Interacts (via RING-type zinc finger) with PPARGC1A. Interacts with NOD1. In terms of processing, autoubiquitinated (in vitro). Post-translationally, proteolytically cleaved by caspases upon induction of apoptosis by TNF.

The protein resides in the cell membrane. It is found in the endomembrane system. It localises to the nucleus. The protein localises to the nucleus speckle. Its subcellular location is the cytoplasm. The protein resides in the cytosol. It carries out the reaction S-ubiquitinyl-[E2 ubiquitin-conjugating enzyme]-L-cysteine + [acceptor protein]-L-lysine = [E2 ubiquitin-conjugating enzyme]-L-cysteine + N(6)-ubiquitinyl-[acceptor protein]-L-lysine.. Its pathway is protein modification; protein ubiquitination. Its function is as follows. E3 ubiquitin-protein ligase that regulates several biological processes through the ubiquitin-mediated proteasomal degradation of various target proteins. Ubiquitinates the caspases CASP8 and CASP10, promoting their proteasomal degradation, to negatively regulate cell death downstream of death domain receptors in the extrinsic pathway of apoptosis. May mediate 'Lys-48'-linked polyubiquitination of RIPK1 and its subsequent proteasomal degradation thereby indirectly regulating the tumor necrosis factor-mediated signaling pathway. Negatively regulates p53/TP53 through its direct ubiquitination and targeting to proteasomal degradation. Indirectly, may also negatively regulate p53/TP53 through ubiquitination and degradation of SFN. Mediates PPARGC1A proteasomal degradation probably through ubiquitination thereby indirectly regulating the metabolism of brown fat cells. Possibly involved in innate immunity, through 'Lys-48'-linked polyubiquitination of NOD1 and its subsequent proteasomal degradation. This Bos taurus (Bovine) protein is E3 ubiquitin-protein ligase RNF34 (RNF34).